We begin with the raw amino-acid sequence, 96 residues long: Large ribosomal subunit protein eL43 (96 aa).

The C4-type zinc finger occupies 41–62 (CPVCAFPKLKRAGTSIWVCEKC).

It belongs to the eukaryotic ribosomal protein eL43 family. Requires Zn(2+) as cofactor.

This chain is Large ribosomal subunit protein eL43, found in Methanococcus maripaludis (strain C5 / ATCC BAA-1333).